Here is a 216-residue protein sequence, read N- to C-terminus: Gas vesicle protein H (216 aa).

The interval 1–141 (MSPNLNGPGG…IHIETRETDD (141 aa)) is disordered. Residues 15-25 (DRPDEPDDSDR) are compositionally biased toward acidic residues. 3 stretches are compositionally biased toward basic and acidic residues: residues 38–51 (PDDR…RPSD), 73–84 (DGHRQGHGRIDR), and 107–141 (KPSD…ETDD).

This sequence belongs to the gas vesicle GvpH family. GvpF to GvpM interact with each other in vitro, and may form multi-subunit complex(es). Interacts with GvpC. Might interact with GvpA.

It is found in the gas vesicle. Proteins GvpF to GvpM might be involved in nucleating gas vesicle formation. A minor component of the gas vesicle. Gas vesicles are hollow, gas filled proteinaceous nanostructures found in some microorganisms. They allow positioning of halobacteria at the optimal depth for growth in the poorly aerated, shallow brine pools of their habitat. In terms of biological role, expression of a 9.5 kb mc-vac DNA fragment containing 2 divergently transcribed regions (gvpD-gvpE-gvpF-gvpG-gvpH-gvpI-gvpJ-gvpK-gvpL-gvpM and gvpA-gvpC-gvpN-gvpO) allows H.volcanii to produce gas vesicles. The sequence is that of Gas vesicle protein H from Haloferax mediterranei (strain ATCC 33500 / DSM 1411 / JCM 8866 / NBRC 14739 / NCIMB 2177 / R-4) (Halobacterium mediterranei).